The primary structure comprises 464 residues: Clusterin-like protein 1 (464 aa).

Residues Met-1–Ser-20 form the signal peptide. Residues Ile-56 to Ser-109 adopt a coiled-coil conformation. Disulfide bonds link Cys-105/Cys-331, Cys-116/Cys-323, Cys-119/Cys-320, Cys-124/Cys-313, and Cys-131/Cys-303. N-linked (GlcNAc...) asparagine glycans are attached at residues Asn-195, Asn-255, Asn-309, Asn-349, Asn-398, and Asn-429.

It belongs to the clusterin family.

The protein localises to the secreted. In Rattus norvegicus (Rat), this protein is Clusterin-like protein 1.